A 92-amino-acid chain; its full sequence is Large ribosomal subunit protein bL25 (92 aa).

Belongs to the bacterial ribosomal protein bL25 family. In terms of assembly, part of the 50S ribosomal subunit; part of the 5S rRNA/L5/L18/L25 subcomplex. Contacts the 5S rRNA. Binds to the 5S rRNA independently of L5 and L18.

Functionally, this is one of the proteins that binds to the 5S RNA in the ribosome where it forms part of the central protuberance. The polypeptide is Large ribosomal subunit protein bL25 (Vibrio cholerae serotype O1 (strain ATCC 39541 / Classical Ogawa 395 / O395)).